The sequence spans 239 residues: 7-cyano-7-deazaguanine synthase (239 aa).

13–23 serves as a coordination point for ATP; that stretch reads FSGGQDSTTCL. The Zn(2+) site is built by Cys-201, Cys-216, Cys-219, and Cys-222.

It belongs to the QueC family. Zn(2+) serves as cofactor.

It catalyses the reaction 7-carboxy-7-deazaguanine + NH4(+) + ATP = 7-cyano-7-deazaguanine + ADP + phosphate + H2O + H(+). The protein operates within purine metabolism; 7-cyano-7-deazaguanine biosynthesis. In terms of biological role, catalyzes the ATP-dependent conversion of 7-carboxy-7-deazaguanine (CDG) to 7-cyano-7-deazaguanine (preQ(0)). In Bradyrhizobium sp. (strain BTAi1 / ATCC BAA-1182), this protein is 7-cyano-7-deazaguanine synthase.